The chain runs to 307 residues: Probable deoxyhypusine synthase (307 aa).

Lysine 278 serves as the catalytic Nucleophile.

It belongs to the deoxyhypusine synthase family. NAD(+) serves as cofactor.

It carries out the reaction [eIF5A protein]-L-lysine + spermidine = [eIF5A protein]-deoxyhypusine + propane-1,3-diamine. Its pathway is protein modification; eIF5A hypusination. In terms of biological role, catalyzes the NAD-dependent oxidative cleavage of spermidine and the subsequent transfer of the butylamine moiety of spermidine to the epsilon-amino group of a specific lysine residue of the eIF-5A precursor protein to form the intermediate deoxyhypusine residue. The polypeptide is Probable deoxyhypusine synthase (dys) (Methanothermobacter thermautotrophicus (strain ATCC 29096 / DSM 1053 / JCM 10044 / NBRC 100330 / Delta H) (Methanobacterium thermoautotrophicum)).